Here is a 116-residue protein sequence, read N- to C-terminus: Mitochondrial import inner membrane translocase subunit PAM16 like 2 (116 aa).

The N-terminal 27 residues, 1 to 27, are a transit peptide targeting the mitochondrion; that stretch reads MAGRLLANLIVMGSGIIGRAVFQAYRQ. The segment at 57 to 106 is J-like; it reads EARQILGVTEKTSWEEILQKYDKLFENNAKAGSFYLQSKVHRAKECLEVV.

This sequence belongs to the TIM16/PAM16 family. In terms of tissue distribution, expressed constitutively and ubiquitously, except in root tips, at low levels.

It localises to the mitochondrion inner membrane. It is found in the cytoplasm. Its function is as follows. Regulates ATP-dependent protein translocation into the mitochondrial matrix. Involved in the uptake of thaxtomin, a phytotoxin produced by Streptomyces bacteria, that causes dramatic cell swelling, reduced seedling growth, and inhibition of cellulose synthesis. Modulates polar auxin transport. Involved in importing a negative regulator of plant immunity into mitochondria, thus protecting plants from over-accumulation of reactive oxygen species (ROS) and preventing autoimmunity. Confers sensitivity to virulent pathogens such as the oomycete H.arabidopsidis Noco2 and the bacteria P.syringae pv. maculicola ES4326. In Arabidopsis thaliana (Mouse-ear cress), this protein is Mitochondrial import inner membrane translocase subunit PAM16 like 2.